Here is a 29-residue protein sequence, read N- to C-terminus: Cyclotide cter-L (29 aa).

Positions 1-29 (HEPCGESCVFIPCITTVVGCSCKNKVCYD) form a cross-link, cyclopeptide (His-Asp). 3 cysteine pairs are disulfide-bonded: Cys4–Cys20, Cys8–Cys22, and Cys13–Cys27.

Contains 3 disulfide bonds. In terms of processing, this is a cyclic peptide.

Probably participates in a plant defense mechanism. This chain is Cyclotide cter-L, found in Clitoria ternatea (Butterfly pea).